The primary structure comprises 272 residues: GEM-like protein 5 (272 aa).

The interval 1–42 (MTGSQEDQPKIIIDQEQPKTLETEHQPEPSSSSPDQKKWGTH) is disordered. The span at 16-27 (EQPKTLETEHQP) shows a compositional bias: basic and acidic residues. In terms of domain architecture, GRAM spans 143 to 221 (SLFRQIFGTE…ANVATVNPVV (79 aa)).

This sequence belongs to the GEM family.

The sequence is that of GEM-like protein 5 from Arabidopsis thaliana (Mouse-ear cress).